We begin with the raw amino-acid sequence, 389 residues long: Cytochrome b (389 aa).

Transmembrane regions (helical) follow at residues 32–52 (FGSLLALCLIIQILTGCFLAM), 76–98 (YILRYTHANVASFFFIFIYVHIG), 113–133 (LWSIGVIILVLMMAIGFLGYV), and 179–199 (FFSLHYILPFVLAALAVAHMI). Heme b-binding residues include histidine 82 and histidine 96. Histidine 183 and histidine 197 together coordinate heme b. Residue histidine 202 participates in a ubiquinone binding. The next 4 membrane-spanning stretches (helical) occupy residues 225–245 (FIFKDLVTIFAFFLVLSIIVF), 289–309 (LLGVLAMFGSLLILLIMPFVD), 322–342 (INMVFFTIFVCNFITLGLVGA), and 349–369 (FIFLGQVCTTIYFAYFFVIVP).

Belongs to the cytochrome b family. Fungal cytochrome b-c1 complex contains 10 subunits; 3 respiratory subunits, 2 core proteins and 5 low-molecular weight proteins. Cytochrome b-c1 complex is a homodimer. Heme b serves as cofactor.

It localises to the mitochondrion inner membrane. Functionally, component of the ubiquinol-cytochrome c reductase complex (complex III or cytochrome b-c1 complex) that is part of the mitochondrial respiratory chain. The b-c1 complex mediates electron transfer from ubiquinol to cytochrome c. Contributes to the generation of a proton gradient across the mitochondrial membrane that is then used for ATP synthesis. The sequence is that of Cytochrome b (COB) from Mycena viridimarginata.